Consider the following 644-residue polypeptide: Threonine--tRNA ligase (644 aa).

The 62-residue stretch at 1-62 folds into the TGS domain; the sequence is MSFSITLPDG…DSDSEVAIIT (62 aa). Residues 240-538 are catalytic; that stretch reads DHRTIGRDLD…LTEIYKGAFP (299 aa). Cys334, His385, and His515 together coordinate Zn(2+).

The protein belongs to the class-II aminoacyl-tRNA synthetase family. In terms of assembly, homodimer. It depends on Zn(2+) as a cofactor.

It is found in the cytoplasm. The enzyme catalyses tRNA(Thr) + L-threonine + ATP = L-threonyl-tRNA(Thr) + AMP + diphosphate + H(+). Catalyzes the attachment of threonine to tRNA(Thr) in a two-step reaction: L-threonine is first activated by ATP to form Thr-AMP and then transferred to the acceptor end of tRNA(Thr). Also edits incorrectly charged L-seryl-tRNA(Thr). In Lactobacillus helveticus (strain DPC 4571), this protein is Threonine--tRNA ligase.